Here is a 437-residue protein sequence, read N- to C-terminus: GTPase Der (437 aa).

EngA-type G domains are found at residues 3–167 and 176–352; these read NLVA…KKES and PRFA…ENRM. Residues 9–16, 56–60, 119–122, 182–189, 229–233, and 294–297 each bind GTP; these read GRPNVGKS, DTGGW, NKTD, GRPNAGKS, DTAGI, and NKWD. The region spanning 353 to 437 is the KH-like domain; that stretch reads IKIPTARLNE…TPINIYIRQK (85 aa).

The protein belongs to the TRAFAC class TrmE-Era-EngA-EngB-Septin-like GTPase superfamily. EngA (Der) GTPase family. Associates with the 50S ribosomal subunit.

Its function is as follows. GTPase that plays an essential role in the late steps of ribosome biogenesis. The polypeptide is GTPase Der (Bacteroides fragilis (strain ATCC 25285 / DSM 2151 / CCUG 4856 / JCM 11019 / LMG 10263 / NCTC 9343 / Onslow / VPI 2553 / EN-2)).